Reading from the N-terminus, the 337-residue chain is Cytoskeleton protein RodZ (337 aa).

The Cytoplasmic portion of the chain corresponds to 1–111 (MNTEATHDQN…LGKRRKKRDG (111 aa)). Residues 19–71 (LRNAREQLGLSQQAVAERLCLKVSTVRDIEEDKAPADLASTFLRGYIRSYARL) form the HTH cro/C1-type domain. Residues 30–49 (QQAVAERLCLKVSTVRDIEE) constitute a DNA-binding region (H-T-H motif). Residues 112–132 (WLMTFTWLVLFVVIGLSGAWW) traverse the membrane as a helical; Signal-anchor for type II membrane protein segment. At 133-337 (WQDHKAQQEE…TLNAEQSPAQ (205 aa)) the chain is on the periplasmic side. A compositionally biased stretch (polar residues) spans 145 to 167 (TMADQSSAELSSNSEQGQSVPLN). Positions 145-237 (TMADQSSAEL…ATTTPDGAAP (93 aa)) are disordered. The segment covering 168 to 207 (TSTTTDPATTSTPPASVDTTATNTQTPAVTAPAPAVDPQQ) has biased composition (low complexity). Residues 208–218 (NAVVSPSQANV) show a composition bias toward polar residues. The span at 219 to 237 (DTAATPAPTATTTPDGAAP) shows a compositional bias: low complexity.

Belongs to the RodZ family.

It localises to the cell inner membrane. In terms of biological role, cytoskeletal protein that is involved in cell-shape control through regulation of the length of the long axis. This Escherichia coli (strain 55989 / EAEC) protein is Cytoskeleton protein RodZ.